The primary structure comprises 262 residues: Ribosomal RNA small subunit methyltransferase A (262 aa).

Residues Asn-13, Leu-15, Gly-40, Glu-61, Asp-85, and Asn-104 each contribute to the S-adenosyl-L-methionine site.

Belongs to the class I-like SAM-binding methyltransferase superfamily. rRNA adenine N(6)-methyltransferase family. RsmA subfamily.

The protein localises to the cytoplasm. The catalysed reaction is adenosine(1518)/adenosine(1519) in 16S rRNA + 4 S-adenosyl-L-methionine = N(6)-dimethyladenosine(1518)/N(6)-dimethyladenosine(1519) in 16S rRNA + 4 S-adenosyl-L-homocysteine + 4 H(+). In terms of biological role, specifically dimethylates two adjacent adenosines (A1518 and A1519) in the loop of a conserved hairpin near the 3'-end of 16S rRNA in the 30S particle. May play a critical role in biogenesis of 30S subunits. In Chromobacterium violaceum (strain ATCC 12472 / DSM 30191 / JCM 1249 / CCUG 213 / NBRC 12614 / NCIMB 9131 / NCTC 9757 / MK), this protein is Ribosomal RNA small subunit methyltransferase A.